A 689-amino-acid polypeptide reads, in one-letter code: Glycine--tRNA ligase beta subunit (689 aa).

Belongs to the class-II aminoacyl-tRNA synthetase family. Tetramer of two alpha and two beta subunits.

The protein resides in the cytoplasm. The enzyme catalyses tRNA(Gly) + glycine + ATP = glycyl-tRNA(Gly) + AMP + diphosphate. In Pseudoalteromonas translucida (strain TAC 125), this protein is Glycine--tRNA ligase beta subunit.